Here is a 153-residue protein sequence, read N- to C-terminus: MAKKMLNKVMDFLGLEEEIDEIEEMDNEAIVEGNEEIDNIFDSSNVRNQKGKVVSIHTTTSTKVLILKPMDYDAAIEICDNLKSRKIIVVNMTSLESKIAQRLLDFIAGASYALGGSLDEIDKGVYIVSPSNVEITNELKNELSTKGILNWTK.

It belongs to the SepF family. In terms of assembly, homodimer. Interacts with FtsZ.

It localises to the cytoplasm. Its function is as follows. Cell division protein that is part of the divisome complex and is recruited early to the Z-ring. Probably stimulates Z-ring formation, perhaps through the cross-linking of FtsZ protofilaments. Its function overlaps with FtsA. The sequence is that of Cell division protein SepF from Clostridium novyi (strain NT).